A 978-amino-acid chain; its full sequence is Tyrosine-protein kinase transforming protein fms (978 aa).

Topologically, residues 1-543 (RMPSGPGHYG…IGAHTPLPDE (543 aa)) are extracellular. 5 consecutive Ig-like C2-type domains span residues 55-134 (PVIQ…IHLY), 141-231 (PWKV…KVQK), 236-331 (PATL…RVVE), 333-431 (AYSN…LTLR), and 434-533 (PEVR…WPIS). Cys-76 and Cys-118 are disulfide-bonded. N-linked (GlcNAc...) asparagine; by host glycosylation is found at Asn-79, Asn-107, Asn-128, Asn-187, Asn-309, Asn-320, Asn-336, Asn-369, Asn-444, Asn-511, and Asn-524. 2 disulfides stabilise this stretch: Cys-161–Cys-211 and Cys-258–Cys-312. Cys-451 and Cys-516 are joined by a disulfide. Residues 544-568 (LLFTPVLLTCMSIMALLLLLLLLLL) traverse the membrane as a helical segment. At 569-978 (YKYKQKPKYQ…PWQRTPPVAR (410 aa)) the chain is on the cytoplasmic side. The Protein kinase domain occupies 613-942 (LQFGKTLGTG…PTFQQICSLL (330 aa)). Residues 619-627 (LGTGAFGKV) and Lys-647 contribute to the ATP site. Asp-810 serves as the catalytic Proton acceptor. Tyr-841 is modified (phosphotyrosine; by autocatalysis). A disordered region spans residues 952-978 (VPNYTNLPSSSSSRLLRPWQRTPPVAR). Residues 958–969 (LPSSSSSRLLRP) are compositionally biased toward low complexity. Thr-973 is subject to Phosphothreonine.

The protein belongs to the protein kinase superfamily. Tyr protein kinase family. CSF-1/PDGF receptor subfamily.

It localises to the membrane. It carries out the reaction L-tyrosyl-[protein] + ATP = O-phospho-L-tyrosyl-[protein] + ADP + H(+). Functionally, truncated version of the receptor for colony-stimulating factor 1 (CSF-1). In Felidae (cat family), this protein is Tyrosine-protein kinase transforming protein fms (V-FMS).